A 360-amino-acid chain; its full sequence is Phospho-N-acetylmuramoyl-pentapeptide-transferase (360 aa).

The next 10 helical transmembrane spans lie at 2–22, 52–72, 80–100, 114–134, 156–176, 189–209, 235–255, 259–279, 284–304, and 338–358; these read IAILVSGAVGLLVSLFGTPLF, MGGVVIIAATVLGYTVANISA, GLLLLFLMIGLGVIGFLDDFI, WKIIGQGVIGVTFSVLALQFP, LAFAGAAVGLVLFVIWANFLI, LDGLATGVSVFVFSAYVVVTM, LAIVTAAIVGACAGFLWWNAS, IFMGDTGALALGGALAGLSIL, FLAVIIGGLFVVIVLSDVIQI, and FWLIAALFVALGVGIFYAEWV.

This sequence belongs to the glycosyltransferase 4 family. MraY subfamily. The cofactor is Mg(2+).

The protein resides in the cell membrane. It catalyses the reaction UDP-N-acetyl-alpha-D-muramoyl-L-alanyl-gamma-D-glutamyl-meso-2,6-diaminopimeloyl-D-alanyl-D-alanine + di-trans,octa-cis-undecaprenyl phosphate = di-trans,octa-cis-undecaprenyl diphospho-N-acetyl-alpha-D-muramoyl-L-alanyl-D-glutamyl-meso-2,6-diaminopimeloyl-D-alanyl-D-alanine + UMP. It functions in the pathway cell wall biogenesis; peptidoglycan biosynthesis. Catalyzes the initial step of the lipid cycle reactions in the biosynthesis of the cell wall peptidoglycan: transfers peptidoglycan precursor phospho-MurNAc-pentapeptide from UDP-MurNAc-pentapeptide onto the lipid carrier undecaprenyl phosphate, yielding undecaprenyl-pyrophosphoryl-MurNAc-pentapeptide, known as lipid I. The chain is Phospho-N-acetylmuramoyl-pentapeptide-transferase from Beutenbergia cavernae (strain ATCC BAA-8 / DSM 12333 / CCUG 43141 / JCM 11478 / NBRC 16432 / NCIMB 13614 / HKI 0122).